Consider the following 226-residue polypeptide: MAWRSVGANNEDLIRQLKDHGVIASDAVAQAMKETDRKHYSPRNPYMDAPQPIGGGVTISAPHMHAFALEYLRDHLKPGARILDVGSGSGYLTACFYRYIKAKGVDADTRIVGIEHQAELVRRSKANLNTDDRSMLDSGQLLIVEGDGRKGYPPNAPYNAIHVGAAAPDTPTELINQLASGGRLIVPVGPDGGSQYMQQYDKDANGKVEMTRLMGVMYVPLTDLRS.

Residues 57–60, histidine 65, serine 89, 115–116, 147–148, and threonine 222 each bind S-adenosyl-L-homocysteine; these read VTIS, EH, and DG. The active site involves serine 60.

It belongs to the methyltransferase superfamily. L-isoaspartyl/D-aspartyl protein methyltransferase family. As to quaternary structure, monomer.

It is found in the cytoplasm. The protein localises to the cytosol. The enzyme catalyses [protein]-L-isoaspartate + S-adenosyl-L-methionine = [protein]-L-isoaspartate alpha-methyl ester + S-adenosyl-L-homocysteine. Initiates the repair of damaged proteins by catalyzing methyl esterification of L-isoaspartyl and D-aspartyl residues produced by spontaneous isomerization and racemization of L-aspartyl and L-asparaginyl residues in aging peptides and proteins. This is Protein-L-isoaspartate(D-aspartate) O-methyltransferase (Pcmt) from Drosophila melanogaster (Fruit fly).